An 89-amino-acid polypeptide reads, in one-letter code: Probable oxaloacetate decarboxylase gamma chain (89 aa).

The helical transmembrane segment at Leu13–Thr33 threads the bilayer.

Belongs to the OadG family. Heterotrimer of an alpha, a beta and a gamma subunit. It depends on Na(+) as a cofactor.

Its subcellular location is the cell membrane. The enzyme catalyses oxaloacetate + 2 Na(+)(in) + H(+) = pyruvate + 2 Na(+)(out) + CO2. Functionally, catalyzes the decarboxylation of oxaloacetate coupled to Na(+) translocation. This is Probable oxaloacetate decarboxylase gamma chain from Actinobacillus succinogenes (strain ATCC 55618 / DSM 22257 / CCUG 43843 / 130Z).